A 233-amino-acid polypeptide reads, in one-letter code: Purine nucleoside phosphorylase DeoD-type (233 aa).

Residue histidine 4 coordinates a purine D-ribonucleoside. Phosphate-binding positions include glycine 20, arginine 24, arginine 43, and 87-90 (RIGT). A purine D-ribonucleoside-binding positions include 179-181 (EME) and 203-204 (SD). Catalysis depends on aspartate 204, which acts as the Proton donor.

It belongs to the PNP/UDP phosphorylase family. As to quaternary structure, homohexamer; trimer of homodimers.

It catalyses the reaction a purine D-ribonucleoside + phosphate = a purine nucleobase + alpha-D-ribose 1-phosphate. The enzyme catalyses a purine 2'-deoxy-D-ribonucleoside + phosphate = a purine nucleobase + 2-deoxy-alpha-D-ribose 1-phosphate. Its function is as follows. Catalyzes the reversible phosphorolytic breakdown of the N-glycosidic bond in the beta-(deoxy)ribonucleoside molecules, with the formation of the corresponding free purine bases and pentose-1-phosphate. The chain is Purine nucleoside phosphorylase DeoD-type from Helicobacter acinonychis (strain Sheeba).